The primary structure comprises 41 residues: Augerpeptide hhe6.1 (41 aa).

3 disulfide bridges follow: cysteine 11/cysteine 32, cysteine 18/cysteine 35, and cysteine 31/cysteine 40.

In terms of tissue distribution, expressed by the venom duct.

The protein resides in the secreted. This chain is Augerpeptide hhe6.1, found in Hastula hectica (Sea snail).